The following is a 152-amino-acid chain: Transcriptional regulator MraZ (152 aa).

SpoVT-AbrB domains lie at Ala5–Glu52 and Ala81–Ala124.

Belongs to the MraZ family. As to quaternary structure, forms oligomers.

It is found in the cytoplasm. The protein localises to the nucleoid. Negatively regulates its own expression and that of the subsequent genes in the proximal part of the division and cell wall (dcw) gene cluster. Acts by binding directly to DNA. May also regulate the expression of genes outside the dcw cluster. The sequence is that of Transcriptional regulator MraZ from Photorhabdus laumondii subsp. laumondii (strain DSM 15139 / CIP 105565 / TT01) (Photorhabdus luminescens subsp. laumondii).